The sequence spans 130 residues: Small ribosomal subunit protein uS9 (130 aa).

This sequence belongs to the universal ribosomal protein uS9 family.

The polypeptide is Small ribosomal subunit protein uS9 (Shewanella piezotolerans (strain WP3 / JCM 13877)).